We begin with the raw amino-acid sequence, 83 residues long: uncharacterized protein (83 aa).

3 consecutive transmembrane segments (helical) span residues 5 to 22 (VLLSIIIFLGINQNVYSI), 32 to 49 (IIKIVIILGIVILIFSPA), and 56 to 78 (IGTILGLACAYFTYKYIIPIFIA).

Its subcellular location is the cell membrane. This is an uncharacterized protein from Rickettsia prowazekii (strain Madrid E).